Here is an 81-residue protein sequence, read N- to C-terminus: ATP synthase subunit c (81 aa).

2 helical membrane passes run alanine 6–phenylalanine 26 and leucine 57–alanine 77.

Belongs to the ATPase C chain family. In terms of assembly, F-type ATPases have 2 components, F(1) - the catalytic core - and F(0) - the membrane proton channel. F(1) has five subunits: alpha(3), beta(3), gamma(1), delta(1), epsilon(1). F(0) has four main subunits: a(1), b(1), b'(1) and c(10-14). The alpha and beta chains form an alternating ring which encloses part of the gamma chain. F(1) is attached to F(0) by a central stalk formed by the gamma and epsilon chains, while a peripheral stalk is formed by the delta, b and b' chains.

The protein localises to the cellular thylakoid membrane. In terms of biological role, f(1)F(0) ATP synthase produces ATP from ADP in the presence of a proton or sodium gradient. F-type ATPases consist of two structural domains, F(1) containing the extramembraneous catalytic core and F(0) containing the membrane proton channel, linked together by a central stalk and a peripheral stalk. During catalysis, ATP synthesis in the catalytic domain of F(1) is coupled via a rotary mechanism of the central stalk subunits to proton translocation. Its function is as follows. Key component of the F(0) channel; it plays a direct role in translocation across the membrane. A homomeric c-ring of between 10-14 subunits forms the central stalk rotor element with the F(1) delta and epsilon subunits. In Rippkaea orientalis (strain PCC 8801 / RF-1) (Cyanothece sp. (strain PCC 8801)), this protein is ATP synthase subunit c.